The following is a 290-amino-acid chain: Pantothenate synthetase (290 aa).

34-41 contributes to the ATP binding site; that stretch reads MGNLHDGH. The active-site Proton donor is the His41. Gln65 serves as a coordination point for (R)-pantoate. Position 65 (Gln65) interacts with beta-alanine. 156–159 contacts ATP; the sequence is GKKD. Gln162 is a binding site for (R)-pantoate. Residues Ala185 and 193-196 each bind ATP; that span reads LSSR.

The protein belongs to the pantothenate synthetase family. In terms of assembly, homodimer.

It is found in the cytoplasm. It carries out the reaction (R)-pantoate + beta-alanine + ATP = (R)-pantothenate + AMP + diphosphate + H(+). It functions in the pathway cofactor biosynthesis; (R)-pantothenate biosynthesis; (R)-pantothenate from (R)-pantoate and beta-alanine: step 1/1. In terms of biological role, catalyzes the condensation of pantoate with beta-alanine in an ATP-dependent reaction via a pantoyl-adenylate intermediate. This Acidovorax ebreus (strain TPSY) (Diaphorobacter sp. (strain TPSY)) protein is Pantothenate synthetase.